A 213-amino-acid chain; its full sequence is MQILLAALVAYLIGSVSFAVVVSSVMGLADPRSYGSKNPGATNVLRSGNKKAAILTLVGDAFKGWIAVWLARHFGLPDVAVAWVAIAVFLGHLYPVFFRFQGGKGVATAAGVLLAVHPVLGLATALTWLIVAFFFRYSSLAALVAAVFAPVFDVFLFGTPGHNPVAWAVLAMSVLLVWRHRGNISKLLAGQESRIGDKKKAAADGGAQDGGKA.

A run of 5 helical transmembrane segments spans residues 3 to 23, 51 to 71, 78 to 98, 115 to 135, and 140 to 160; these read ILLA…VVVS, KAAI…VWLA, DVAV…PVFF, AVHP…AFFF, and LAAL…FGTP.

The protein belongs to the PlsY family. In terms of assembly, probably interacts with PlsX.

It localises to the cell inner membrane. The catalysed reaction is an acyl phosphate + sn-glycerol 3-phosphate = a 1-acyl-sn-glycero-3-phosphate + phosphate. It participates in lipid metabolism; phospholipid metabolism. Functionally, catalyzes the transfer of an acyl group from acyl-phosphate (acyl-PO(4)) to glycerol-3-phosphate (G3P) to form lysophosphatidic acid (LPA). This enzyme utilizes acyl-phosphate as fatty acyl donor, but not acyl-CoA or acyl-ACP. This is Glycerol-3-phosphate acyltransferase from Burkholderia cenocepacia (strain ATCC BAA-245 / DSM 16553 / LMG 16656 / NCTC 13227 / J2315 / CF5610) (Burkholderia cepacia (strain J2315)).